Here is a 371-residue protein sequence, read N- to C-terminus: MIARNQRTRVAVVYGGRSSEHAISCVSAGSILRNLDPERFDVVAVGITPDGSWVLTDGRPETLAITDGRLPEVSAESGTALALPADPGRRGELVSLSPAPAGEVLAAVDVVFPVLHGPYGEDGTIQGLLELAGVPYVGAGVLASAAGMDKEFTKKLLVAEGLPVGDHVVLRPGRANVTLDERERLGLPVFVKPARGGSSIGVSRVSDWAELPAAIEAARRHDPKVIVEAGIAGRELECGVLEYPDGRVDASTIGEIRVAGVRGREDGFYDFATKYLDDGAELDVPAKVEDDVADEIRRLAIRAFRAIDCQGLARVDFFLTDDGPVVNEINTMPGFTTISMYPRMWAASGVDYPTLLAAMVDTAVARGTGLR.

One can recognise an ATP-grasp domain in the interval 154 to 361 (KKLLVAEGLP…YPTLLAAMVD (208 aa)). ATP is bound at residue 182–237 (RERLGLPVFVKPARGGSSIGVSRVSDWAELPAAIEAARRHDPKVIVEAGIAGRELE). Positions 316, 328, and 330 each coordinate Mg(2+).

It belongs to the D-alanine--D-alanine ligase family. Mg(2+) serves as cofactor. Mn(2+) is required as a cofactor.

Its subcellular location is the cytoplasm. The catalysed reaction is 2 D-alanine + ATP = D-alanyl-D-alanine + ADP + phosphate + H(+). It functions in the pathway cell wall biogenesis; peptidoglycan biosynthesis. Functionally, cell wall formation. This Mycobacterium sp. (strain JLS) protein is D-alanine--D-alanine ligase.